The primary structure comprises 366 residues: Pyrimidine monooxygenase RutA (366 aa).

Residues I49 to K50, N115, E124, R140 to Y141, and S190 contribute to the FMN site.

Belongs to the NtaA/SnaA/DszA monooxygenase family. RutA subfamily.

It carries out the reaction uracil + FMNH2 + NADH + O2 = (Z)-3-ureidoacrylate + FMN + NAD(+) + H2O + H(+). It catalyses the reaction thymine + FMNH2 + NADH + O2 = (Z)-2-methylureidoacrylate + FMN + NAD(+) + H2O + H(+). Functionally, catalyzes the pyrimidine ring opening between N-3 and C-4 by an unusual flavin hydroperoxide-catalyzed mechanism, adding oxygen atoms in the process to yield ureidoacrylate peracid, that immediately reacts with FMN forming ureidoacrylate and FMN-N(5)-oxide. The FMN-N(5)-oxide reacts spontaneously with NADH to produce FMN. Requires the flavin reductase RutF to regenerate FMN in vivo. The sequence is that of Pyrimidine monooxygenase RutA from Serratia proteamaculans (strain 568).